A 237-amino-acid chain; its full sequence is Golgi to ER traffic protein 1 (237 aa).

The Lumenal portion of the chain corresponds to M1–G4. Residues G5–T24 form a helical membrane-spanning segment. The Cytoplasmic portion of the chain corresponds to S25–K110. Residues E40–N99 adopt a coiled-coil conformation. Residues L111–Y131 traverse the membrane as a helical segment. Topologically, residues H132–G176 are lumenal. The chain crosses the membrane as a helical span at residues V177–L193. At E194–D237 the chain is on the cytoplasmic side. The interval P205–D237 is disordered. Basic and acidic residues predominate over residues T217–D237.

The protein belongs to the WRB/GET1 family. Component of the Golgi to ER traffic (GET) complex, which is composed of GET1, GET2 and GET3. Within the complex, GET1 and GET2 form a heterotetramer which is stabilized by phosphatidylinositol binding and which binds to the GET3 homodimer.

Its subcellular location is the endoplasmic reticulum membrane. The protein resides in the golgi apparatus membrane. In terms of biological role, required for the post-translational delivery of tail-anchored (TA) proteins to the endoplasmic reticulum. Together with GET2, acts as a membrane receptor for soluble GET3, which recognizes and selectively binds the transmembrane domain of TA proteins in the cytosol. The GET complex cooperates with the HDEL receptor ERD2 to mediate the ATP-dependent retrieval of resident ER proteins that contain a C-terminal H-D-E-L retention signal from the Golgi to the ER. This is Golgi to ER traffic protein 1 from Zygosaccharomyces rouxii (strain ATCC 2623 / CBS 732 / NBRC 1130 / NCYC 568 / NRRL Y-229).